A 254-amino-acid chain; its full sequence is Probable pectate lyase E (254 aa).

The signal sequence occupies residues 1–17 (MYQPLLLLPLLLTSAFA). An N-linked (GlcNAc...) asparagine glycan is attached at asparagine 175. A disordered region spans residues 227-254 (TDNNDKEPKKKGSGPSNACKYKEPLSKC).

Belongs to the polysaccharide lyase 3 family. The cofactor is Ca(2+).

Its subcellular location is the secreted. The enzyme catalyses Eliminative cleavage of (1-&gt;4)-alpha-D-galacturonan to give oligosaccharides with 4-deoxy-alpha-D-galact-4-enuronosyl groups at their non-reducing ends.. Its function is as follows. Pectinolytic enzyme consist of four classes of enzymes: pectin lyase, polygalacturonase, pectin methylesterase and rhamnogalacturonase. Among pectinolytic enzymes, pectin lyase is the most important in depolymerization of pectin, since it cleaves internal glycosidic bonds of highly methylated pectins. Favors pectate, the anion, over pectin, the methyl ester. The sequence is that of Probable pectate lyase E (plyE) from Neosartorya fischeri (strain ATCC 1020 / DSM 3700 / CBS 544.65 / FGSC A1164 / JCM 1740 / NRRL 181 / WB 181) (Aspergillus fischerianus).